The primary structure comprises 307 residues: Tyrosine recombinase XerC (307 aa).

The Core-binding (CB) domain maps to Glu-9 to Val-95. One can recognise a Tyr recombinase domain in the interval His-116 to Asp-296. Catalysis depends on residues Arg-155, Lys-179, His-248, Arg-251, and His-274. Tyr-283 serves as the catalytic O-(3'-phospho-DNA)-tyrosine intermediate.

The protein belongs to the 'phage' integrase family. XerC subfamily. Forms a cyclic heterotetrameric complex composed of two molecules of XerC and two molecules of XerD, in which XerC interacts with XerD via its C-terminal region, XerD interacts with XerC via its C-terminal region and so on.

It is found in the cytoplasm. Its activity is regulated as follows. FtsK may regulate the catalytic switch between XerC and XerD in the heterotetrameric complex during the two steps of the recombination process. Functionally, site-specific tyrosine recombinase, which acts by catalyzing the cutting and rejoining of the recombining DNA molecules. Binds cooperatively to specific DNA consensus sequences that are separated from XerD binding sites by a short central region, forming the heterotetrameric XerC-XerD complex that recombines DNA substrates. The complex is essential to convert dimers of the bacterial chromosome into monomers to permit their segregation at cell division. It also contributes to the segregational stability of plasmids. In the complex XerC specifically exchanges the top DNA strands. This chain is Tyrosine recombinase XerC, found in Proteus mirabilis.